The sequence spans 100 residues: NADH-quinone oxidoreductase subunit K (100 aa).

3 helical membrane-spanning segments follow: residues 2 to 22, 29 to 49, and 63 to 83; these read VPTT…MIGV, IMVF…LVAF, and FIVM…IVAI.

The protein belongs to the complex I subunit 4L family. As to quaternary structure, NDH-1 is composed of 15 different subunits. Subunits NuoA, H, J, K, L, M, N constitute the membrane sector of the complex.

It localises to the cell membrane. The enzyme catalyses a quinone + NADH + 5 H(+)(in) = a quinol + NAD(+) + 4 H(+)(out). Functionally, NDH-1 shuttles electrons from NADH, via FMN and iron-sulfur (Fe-S) centers, to quinones in the respiratory chain. The immediate electron acceptor for the enzyme in this species is believed to be a menaquinone. Couples the redox reaction to proton translocation (for every two electrons transferred, four hydrogen ions are translocated across the cytoplasmic membrane), and thus conserves the redox energy in a proton gradient. In Deinococcus deserti (strain DSM 17065 / CIP 109153 / LMG 22923 / VCD115), this protein is NADH-quinone oxidoreductase subunit K.